We begin with the raw amino-acid sequence, 411 residues long: CCA-adding enzyme (411 aa).

The ATP site is built by Gly8 and Arg11. Gly8 and Arg11 together coordinate CTP. Mg(2+)-binding residues include Glu21 and Asp23. ATP contacts are provided by Arg91, Arg137, and Arg140. Residues Arg91, Arg137, and Arg140 each contribute to the CTP site. An HD domain is found at 227–328 (LGNQTMTRLS…MTIFQAFDCW (102 aa)).

Belongs to the tRNA nucleotidyltransferase/poly(A) polymerase family. Bacterial CCA-adding enzyme type 2 subfamily. It depends on Mg(2+) as a cofactor.

It carries out the reaction a tRNA precursor + 2 CTP + ATP = a tRNA with a 3' CCA end + 3 diphosphate. It catalyses the reaction a tRNA with a 3' CCA end + 2 CTP + ATP = a tRNA with a 3' CCACCA end + 3 diphosphate. Functionally, catalyzes the addition and repair of the essential 3'-terminal CCA sequence in tRNAs without using a nucleic acid template. Adds these three nucleotides in the order of C, C, and A to the tRNA nucleotide-73, using CTP and ATP as substrates and producing inorganic pyrophosphate. tRNA 3'-terminal CCA addition is required both for tRNA processing and repair. Also involved in tRNA surveillance by mediating tandem CCA addition to generate a CCACCA at the 3' terminus of unstable tRNAs. While stable tRNAs receive only 3'-terminal CCA, unstable tRNAs are marked with CCACCA and rapidly degraded. This chain is CCA-adding enzyme, found in Blochmanniella floridana.